Consider the following 1377-residue polypeptide: DNA-directed RNA polymerase subunit beta (1377 aa).

Belongs to the RNA polymerase beta chain family. The RNAP catalytic core consists of 2 alpha, 1 beta, 1 beta' and 1 omega subunit. When a sigma factor is associated with the core the holoenzyme is formed, which can initiate transcription.

The enzyme catalyses RNA(n) + a ribonucleoside 5'-triphosphate = RNA(n+1) + diphosphate. Functionally, DNA-dependent RNA polymerase catalyzes the transcription of DNA into RNA using the four ribonucleoside triphosphates as substrates. This chain is DNA-directed RNA polymerase subunit beta, found in Orientia tsutsugamushi (strain Boryong) (Rickettsia tsutsugamushi).